An 870-amino-acid polypeptide reads, in one-letter code: MOG interacting and ectopic P-granules protein 1 (870 aa).

The tract at residues 1–244 (MVTADETVLA…VPEEDNNEQA (244 aa)) is disordered. The span at 9–20 (LATTTNTTSMSV) shows a compositional bias: polar residues. Over residues 41–51 (EQLKAEQREVM) the composition is skewed to basic and acidic residues. Composition is skewed to acidic residues over residues 77-99 (EVIE…DENG), 129-142 (IEQD…EITE), and 203-214 (IELDDDDDDEIQ). 2 C2H2-type zinc fingers span residues 421 to 444 (HRCD…ENLH) and 450 to 473 (FQCT…FETH). The CCHC-type zinc finger occupies 486–508 (YPCAICEEDFNFKGVREQHYKQC). Composition is skewed to polar residues over residues 673 to 688 (LQAA…SQKT) and 695 to 708 (KLVT…VGSS). Positions 673 to 708 (LQAAVNSMRSQNSQKTPTHRSSKLVTTPSHATVGSS) are disordered. 4 consecutive C2H2-type zinc fingers follow at residues 713 to 736 (FVCE…QTTH), 753 to 776 (LACS…VMSH), 794 to 815 (GRCK…VADH), and 826 to 849 (YSCD…TSNH). The tract at residues 847–870 (SNHPKGDKKTSTPAKKDDCITLDD) is disordered. The span at 850–870 (PKGDKKTSTPAKKDDCITLDD) shows a compositional bias: basic and acidic residues.

Interacts with hda-1, let-418, lin-1, mog-1, mog-4, mog-5, mog-6, pie-1 and unc-98. Sumoylated. Expressed in somatic cells of embryos, the head, hypodermis and tail of larvae and the germline of adults, including oocytes but not mature sperm and spermatocytes.

The protein resides in the nucleus. Its function is as follows. Has a broad role in development, specifically in the genetic pathway SynMuvB that negatively regulates specification of the vulval cell fate. Required for fem-3 3'-UTR-mediated repression in the regulation of the sperm/oocyte switch. Acts by regulating the translation of fem-3 mRNA, by binding to its 3'-UTR. This chain is MOG interacting and ectopic P-granules protein 1, found in Caenorhabditis elegans.